The sequence spans 104 residues: Putative heat shock protein PS1 (104 aa).

N-linked (GlcNAc...) asparagine glycans are attached at residues Asn-11 and Asn-18. Asn-18 is an ATP binding site.

Belongs to the heat shock protein 90 family. As to quaternary structure, homodimer.

Its subcellular location is the cytoplasm. In terms of biological role, putative molecular chaperone that may promote the maturation, structural maintenance and proper regulation of specific target proteins. The sequence is that of Putative heat shock protein PS1 from Pinus strobus (Eastern white pine).